The following is a 365-amino-acid chain: Histidinol-phosphate aminotransferase (365 aa).

N6-(pyridoxal phosphate)lysine is present on K223.

It belongs to the class-II pyridoxal-phosphate-dependent aminotransferase family. Histidinol-phosphate aminotransferase subfamily. As to quaternary structure, homodimer. Pyridoxal 5'-phosphate serves as cofactor.

It catalyses the reaction L-histidinol phosphate + 2-oxoglutarate = 3-(imidazol-4-yl)-2-oxopropyl phosphate + L-glutamate. It functions in the pathway amino-acid biosynthesis; L-histidine biosynthesis; L-histidine from 5-phospho-alpha-D-ribose 1-diphosphate: step 7/9. The sequence is that of Histidinol-phosphate aminotransferase from Brucella abortus (strain 2308).